The primary structure comprises 863 residues: Leucine--tRNA ligase (863 aa).

The short motif at 42 to 52 (PYPSGKIHMGH) is the 'HIGH' region element. Positions 618–622 (KMSKS) match the 'KMSKS' region motif. Lys621 contributes to the ATP binding site.

Belongs to the class-I aminoacyl-tRNA synthetase family.

It localises to the cytoplasm. It carries out the reaction tRNA(Leu) + L-leucine + ATP = L-leucyl-tRNA(Leu) + AMP + diphosphate. This Desulfatibacillum aliphaticivorans protein is Leucine--tRNA ligase.